Reading from the N-terminus, the 69-residue chain is DNA gyrase inhibitor YacG (69 aa).

Residues 1–28 form a disordered region; it reads MSGEGKKHGSNVEPLRPTRPCPECGRPS. Positions 21, 24, 36, and 40 each coordinate Zn(2+).

This sequence belongs to the DNA gyrase inhibitor YacG family. Interacts with GyrB. Zn(2+) is required as a cofactor.

In terms of biological role, inhibits all the catalytic activities of DNA gyrase by preventing its interaction with DNA. Acts by binding directly to the C-terminal domain of GyrB, which probably disrupts DNA binding by the gyrase. This Sinorhizobium fredii (strain NBRC 101917 / NGR234) protein is DNA gyrase inhibitor YacG.